A 285-amino-acid chain; its full sequence is Undecaprenyl-diphosphatase (285 aa).

Helical transmembrane passes span 40-60, 89-109, 137-157, 171-191, 209-229, 241-261, and 265-285; these read GPLIDVAVHVGSLLAIIVYFF, LFWWIVLGTIPAVAFGLAIKL, DLIAFNLIVYGIALGLADWLG, GLIVGIAQALAIIPGTSRSGV, FSFLLSIPAVAGAGVLIVPEI, LIAGVLTFIAAFLTMAFLMNF, and ASMLVFVFYRVAMGCALLAFF.

The protein belongs to the UppP family.

It localises to the cell inner membrane. The enzyme catalyses di-trans,octa-cis-undecaprenyl diphosphate + H2O = di-trans,octa-cis-undecaprenyl phosphate + phosphate + H(+). In terms of biological role, catalyzes the dephosphorylation of undecaprenyl diphosphate (UPP). Confers resistance to bacitracin. The sequence is that of Undecaprenyl-diphosphatase from Erythrobacter litoralis (strain HTCC2594).